The primary structure comprises 709 residues: Elongation factor G (709 aa).

The 283-residue stretch at 8-290 folds into the tr-type G domain; that stretch reads NRYRNIGISA…AVIQYMPAPQ (283 aa). Residues 17–24, 88–92, and 142–145 contribute to the GTP site; these read AHIDAGKT, DTPGH, and NKMD.

Belongs to the TRAFAC class translation factor GTPase superfamily. Classic translation factor GTPase family. EF-G/EF-2 subfamily.

The protein resides in the cytoplasm. Catalyzes the GTP-dependent ribosomal translocation step during translation elongation. During this step, the ribosome changes from the pre-translocational (PRE) to the post-translocational (POST) state as the newly formed A-site-bound peptidyl-tRNA and P-site-bound deacylated tRNA move to the P and E sites, respectively. Catalyzes the coordinated movement of the two tRNA molecules, the mRNA and conformational changes in the ribosome. The chain is Elongation factor G from Psychrobacter sp. (strain PRwf-1).